Consider the following 241-residue polypeptide: Centromere protein H (241 aa).

Methionine 1 bears the N-acetylmethionine mark. Residues 1–24 (MEEQPRERSEAGAEACEEKRGLSQ) form a disordered region. The stretch at 28–186 (ERIEDRISLL…KEDVDKMENS (159 aa)) forms a coiled coil. Residue lysine 61 forms a Glycyl lysine isopeptide (Lys-Gly) (interchain with G-Cter in SUMO2) linkage. Threonine 62 bears the Phosphothreonine mark.

The protein belongs to the CENP-H/MCM16 family. Self-associates. Component of the CENPA-NAC complex, at least composed of CENPA, CENPC, CENPH, CENPM, CENPN, CENPT and CENPU. The CENPA-NAC complex interacts with the CENPA-CAD complex, composed of CENPI, CENPK, CENPL, CENPO, CENPP, CENPQ, CENPR and CENPS. Interacts directly with CENPK. Interacts with KIF2C and NDC80. Interacts with TRIM36. In terms of tissue distribution, abundantly expressed in thymus, spleen, uterus, ovary, testis and muscle, and weakly expressed in small intestine, lung and stomach. Barely detectable expression in kidney, liver, skin and prostate gland. Not detected in brain, heart or adrenal gland. Also expressed weakly in various hematopoietic cell lines.

It is found in the nucleus. The protein resides in the chromosome. The protein localises to the centromere. It localises to the kinetochore. Functionally, component of the CENPA-NAC (nucleosome-associated) complex, a complex that plays a central role in assembly of kinetochore proteins, mitotic progression and chromosome segregation. The CENPA-NAC complex recruits the CENPA-CAD (nucleosome distal) complex and may be involved in incorporation of newly synthesized CENPA into centromeres. Required for chromosome congression and efficiently align the chromosomes on a metaphase plate. The polypeptide is Centromere protein H (Mus musculus (Mouse)).